The following is a 507-amino-acid chain: Probable Xaa-Pro aminopeptidase HCAG_02413 (507 aa).

Residues Asp283, Asp294, Glu431, and Glu469 each contribute to the Mn(2+) site.

It belongs to the peptidase M24B family. Mn(2+) serves as cofactor.

The enzyme catalyses Release of any N-terminal amino acid, including proline, that is linked to proline, even from a dipeptide or tripeptide.. Functionally, catalyzes the removal of a penultimate prolyl residue from the N-termini of peptides. The chain is Probable Xaa-Pro aminopeptidase HCAG_02413 from Ajellomyces capsulatus (strain NAm1 / WU24) (Darling's disease fungus).